The following is an 823-amino-acid chain: Ubiquitin carboxyl-terminal hydrolase 16 (823 aa).

The UBP-type zinc finger occupies 22–142 (PVCRHIRKGL…QVVDYVRKQA (121 aa)). Zn(2+)-binding residues include C24, H26, C48, C51, C74, C77, C82, H90, H94, H103, C116, and C119. Residue K140 forms a Glycyl lysine isopeptide (Lys-Gly) (interchain with G-Cter in SUMO2) linkage. The disordered stretch occupies residues 146–189 (TPKPAEKDNGNIELENKKLEKESKNEQEREKKENMAKENPPMNS). A compositionally biased stretch (basic and acidic residues) spans 149 to 181 (PAEKDNGNIELENKKLEKESKNEQEREKKENMA). S189 bears the Phosphoserine mark. A USP domain is found at 196–822 (KGLSNLGNTC…QAYLLFYERI (627 aa)). C205 acts as the Nucleophile in catalysis. A compositionally biased stretch (basic and acidic residues) spans 394–408 (SGKKSVNDKNLKKTV). The segment at 394–460 (SGKKSVNDKN…AKNQRRQQKI (67 aa)) is disordered. The span at 409–420 (EDEDQDSEEEKD) shows a compositional bias: acidic residues. S415 carries the phosphoserine modification. A compositionally biased stretch (basic and acidic residues) spans 421–430 (NDSYIKERSD). Residues 438–458 (HLQKKAKKQAKKQAKNQRRQQ) show a composition bias toward basic residues. S531 and S552 each carry phosphoserine. T554 bears the Phosphothreonine mark. The active-site Proton acceptor is H758.

It belongs to the peptidase C19 family. USP16 subfamily. Homotetramer. Associates with late pre-40S ribosomes. Interacts with CEP78; promoting deubiquitination of tektins. In terms of processing, phosphorylated at the onset of mitosis and dephosphorylated during the metaphase/anaphase transition. Phosphorylation by AURKB enhances the deubiquitinase activity. Present in all the tissues examined including fetal brain, lung, liver, kidney, and adult heart, brain, placenta, lung, liver, skeletal muscle, kidney and pancreas.

The protein resides in the nucleus. It localises to the cytoplasm. The enzyme catalyses Thiol-dependent hydrolysis of ester, thioester, amide, peptide and isopeptide bonds formed by the C-terminal Gly of ubiquitin (a 76-residue protein attached to proteins as an intracellular targeting signal).. Functionally, specifically deubiquitinates 'Lys-120' of histone H2A (H2AK119Ub), a specific tag for epigenetic transcriptional repression, thereby acting as a coactivator. Deubiquitination of histone H2A is a prerequisite for subsequent phosphorylation at 'Ser-11' of histone H3 (H3S10ph), and is required for chromosome segregation when cells enter into mitosis. In resting B- and T-lymphocytes, phosphorylation by AURKB leads to enhance its activity, thereby maintaining transcription in resting lymphocytes. Regulates Hox gene expression via histone H2A deubiquitination. Prefers nucleosomal substrates. Does not deubiquitinate histone H2B. Also deubiquitinates non-histone proteins, such as ribosomal protein RPS27A: deubiquitination of monoubiquitinated RPS27A promotes maturation of the 40S ribosomal subunit. Also mediates deubiquitination of tektin proteins (TEKT1, TEKT2, TEK3, TEKT4 and TEKT5), promoting their stability. In Homo sapiens (Human), this protein is Ubiquitin carboxyl-terminal hydrolase 16.